Here is a 650-residue protein sequence, read N- to C-terminus: Hemocyanin subunit 2 (650 aa).

2 O-linked (GalNAc...) serine glycosylation sites follow: S120 and S172. H193, H197, and H225 together coordinate Cu cation. N-linked (GlcNAc...) asparagine glycosylation is present at N309. Cu cation is bound by residues H344, H348, and H384.

It belongs to the tyrosinase family. Hemocyanin subfamily. As to quaternary structure, hexamer of a number of different chains, of which five have been identified. Post-translationally, contains one N-glycosylated and three O-glycosylated residues. The position of one of the O-glycosylated residues has not been determined. O-linked glycan at Ser-120 may be composed of two GalNAc, three Gal, and two N-acetylneuraminic acid units for a total 1525-Da MW. As to expression, hemolymph.

The protein resides in the secreted. It localises to the extracellular space. Its function is as follows. Hemocyanins are copper-containing oxygen carriers occurring freely dissolved in the hemolymph of many mollusks and arthropods. The sequence is that of Hemocyanin subunit 2 from Carcinus aestuarii (Green crab).